The sequence spans 165 residues: Nucleoside-triphosphatase THEP1 (165 aa).

ATP contacts are provided by residues Gly7–Thr14 and Leu93–Gly100.

Belongs to the THEP1 NTPase family.

It catalyses the reaction a ribonucleoside 5'-triphosphate + H2O = a ribonucleoside 5'-diphosphate + phosphate + H(+). Has nucleotide phosphatase activity towards ATP, GTP, CTP, TTP and UTP. May hydrolyze nucleoside diphosphates with lower efficiency. This Archaeoglobus fulgidus (strain ATCC 49558 / DSM 4304 / JCM 9628 / NBRC 100126 / VC-16) protein is Nucleoside-triphosphatase THEP1.